The following is a 313-amino-acid chain: Probable 5-dehydro-4-deoxyglucarate dehydratase 1 (313 aa).

This sequence belongs to the DapA family.

It catalyses the reaction 5-dehydro-4-deoxy-D-glucarate + H(+) = 2,5-dioxopentanoate + CO2 + H2O. It functions in the pathway carbohydrate acid metabolism; D-glucarate degradation; 2,5-dioxopentanoate from D-glucarate: step 2/2. This Streptomyces avermitilis (strain ATCC 31267 / DSM 46492 / JCM 5070 / NBRC 14893 / NCIMB 12804 / NRRL 8165 / MA-4680) protein is Probable 5-dehydro-4-deoxyglucarate dehydratase 1.